We begin with the raw amino-acid sequence, 131 residues long: MSMQDSIADMLTTIRNGQISKKEKVCTPSSAMKVAIVHVLVEEGFIQKYNIKDSIKPTLEVFLKYYQKRKPVIDIIKRISRPGLRIYKKRKELPQVMSGMGIIIISTSKGVITDNRARQLNVGGEIICYVS.

The protein belongs to the universal ribosomal protein uS8 family. Part of the 30S ribosomal subunit. Contacts proteins S5 and S12.

Functionally, one of the primary rRNA binding proteins, it binds directly to 16S rRNA central domain where it helps coordinate assembly of the platform of the 30S subunit. The protein is Small ribosomal subunit protein uS8 of Blochmanniella pennsylvanica (strain BPEN).